Reading from the N-terminus, the 237-residue chain is Phosphoribosylaminoimidazole-succinocarboxamide synthase (237 aa).

This sequence belongs to the SAICAR synthetase family.

It catalyses the reaction 5-amino-1-(5-phospho-D-ribosyl)imidazole-4-carboxylate + L-aspartate + ATP = (2S)-2-[5-amino-1-(5-phospho-beta-D-ribosyl)imidazole-4-carboxamido]succinate + ADP + phosphate + 2 H(+). It participates in purine metabolism; IMP biosynthesis via de novo pathway; 5-amino-1-(5-phospho-D-ribosyl)imidazole-4-carboxamide from 5-amino-1-(5-phospho-D-ribosyl)imidazole-4-carboxylate: step 1/2. The polypeptide is Phosphoribosylaminoimidazole-succinocarboxamide synthase (Sodalis glossinidius (strain morsitans)).